The sequence spans 402 residues: CCA-adding enzyme (402 aa).

ATP is bound by residues Gly-32 and Arg-35. CTP-binding residues include Gly-32 and Arg-35. Residues Asp-45 and Asp-47 each contribute to the Mg(2+) site. ATP is bound by residues Arg-116, Asp-159, Arg-162, Arg-165, and Arg-168. Residues Arg-116, Asp-159, Arg-162, Arg-165, and Arg-168 each coordinate CTP.

This sequence belongs to the tRNA nucleotidyltransferase/poly(A) polymerase family. Bacterial CCA-adding enzyme type 3 subfamily. In terms of assembly, homodimer. The cofactor is Mg(2+).

The catalysed reaction is a tRNA precursor + 2 CTP + ATP = a tRNA with a 3' CCA end + 3 diphosphate. The enzyme catalyses a tRNA with a 3' CCA end + 2 CTP + ATP = a tRNA with a 3' CCACCA end + 3 diphosphate. Catalyzes the addition and repair of the essential 3'-terminal CCA sequence in tRNAs without using a nucleic acid template. Adds these three nucleotides in the order of C, C, and A to the tRNA nucleotide-73, using CTP and ATP as substrates and producing inorganic pyrophosphate. tRNA 3'-terminal CCA addition is required both for tRNA processing and repair. Also involved in tRNA surveillance by mediating tandem CCA addition to generate a CCACCA at the 3' terminus of unstable tRNAs. While stable tRNAs receive only 3'-terminal CCA, unstable tRNAs are marked with CCACCA and rapidly degraded. The polypeptide is CCA-adding enzyme (Streptococcus pyogenes serotype M6 (strain ATCC BAA-946 / MGAS10394)).